We begin with the raw amino-acid sequence, 422 residues long: NADH-quinone oxidoreductase subunit D 1 (422 aa).

Belongs to the complex I 49 kDa subunit family. NDH-1 is composed of 14 different subunits. Subunits NuoB, C, D, E, F, and G constitute the peripheral sector of the complex.

It is found in the cell membrane. The catalysed reaction is a quinone + NADH + 5 H(+)(in) = a quinol + NAD(+) + 4 H(+)(out). Its function is as follows. NDH-1 shuttles electrons from NADH, via FMN and iron-sulfur (Fe-S) centers, to quinones in the respiratory chain. The immediate electron acceptor for the enzyme in this species is believed to be ubiquinone. Couples the redox reaction to proton translocation (for every two electrons transferred, four hydrogen ions are translocated across the cytoplasmic membrane), and thus conserves the redox energy in a proton gradient. The protein is NADH-quinone oxidoreductase subunit D 1 of Herpetosiphon aurantiacus (strain ATCC 23779 / DSM 785 / 114-95).